We begin with the raw amino-acid sequence, 248 residues long: Tabserin (248 aa).

The first 19 residues, 1 to 19 (MLKYSALFLYLIYVGGSES), serve as a signal peptide directing secretion. One can recognise a Peptidase S1 domain in the interval 24-248 (IVGGVPVAEE…PYFENGLRKR (225 aa)). The cysteines at positions 49 and 65 are disulfide-linked. Active-site charge relay system residues include histidine 64 and aspartate 111. 2 cysteine pairs are disulfide-bonded: cysteine 175-cysteine 189 and cysteine 201-cysteine 226. Serine 205 acts as the Charge relay system in catalysis.

It belongs to the peptidase S1 family. Expressed in salivary glands.

It localises to the secreted. In terms of biological role, serine protease that inhibits blood coagulation in a dose-dependent manner. May act by destroying coagulant factors to inhibit blood coagulation. In Tabanus yao (Horsefly), this protein is Tabserin.